We begin with the raw amino-acid sequence, 210 residues long: Insulin receptor (210 aa).

A Fibronectin type-III domain is found at 1 to 96; the sequence is VSNSSSQIIL…SQILKELEES (96 aa). N-linked (GlcNAc...) asparagine glycans are attached at residues N3, N21, and N68. The disordered stretch occupies residues 55-78; the sequence is WSPPFESEDSQKHNQSEYEDSAGE. The tract at residues 103–111 is insulin-binding; sequence EDYLHNVVF. A disordered region spans residues 116–169; sequence TSSGTGAEDPRPSRKRRSLGDVGNVTVAVPTVAAFPNTSSTSTPTSPEEHRPFE. Over 133 to 210 the chain is Extracellular; that stretch reads SLGDVGNVTV…EERCSVAAYV (78 aa). Low complexity predominate over residues 137-161; the sequence is VGNVTVAVPTVAAFPNTSSTSTPTS. N-linked (GlcNAc...) asparagine glycosylation is found at N139 and N152. C195 and C204 are disulfide-bonded.

This sequence belongs to the protein kinase superfamily. Tyr protein kinase family. Insulin receptor subfamily. Tetramer of 2 alpha and 2 beta chains linked by disulfide bonds. The alpha chains carry the insulin-binding regions, while the beta chains carry the kinase domain. Forms a hybrid receptor with IGF1R, the hybrid is a tetramer consisting of 1 alpha chain and 1 beta chain of INSR and 1 alpha chain and 1 beta chain of IGF1R. Interacts with SORBS1 but dissociates from it following insulin stimulation. Binds SH2B2. Activated form of INSR interacts (via phosphorylated Tyrosine) with the PTB/PID domains of IRS1 and SHC1. The sequences surrounding the phosphorylated NPXY motif contribute differentially to either IRS1 or SHC1 recognition. Interacts (via tyrosines in the C-terminus) with IRS2 (via PTB domain and 591-786 AA); the 591-786 would be the primary anchor of IRS2 to INSR while the PTB domain would have a stabilizing action on the interaction with INSR. Interacts with the SH2 domains of the 85 kDa regulatory subunit of PI3K (PIK3R1) in vitro, when autophosphorylated on tyrosine residues. Interacts with SOCS7. Interacts with SOCS3. Interacts with SOCS1. Interacts with CAV2 (tyrosine-phosphorylated form); the interaction is increased with 'Tyr-27'phosphorylation of CAV2. Interacts with ARRB2. Interacts with GRB10; this interaction blocks the association between IRS1/IRS2 and INSR, significantly reduces insulin-stimulated tyrosine phosphorylation of IRS1 and IRS2 and thus decreases insulin signaling. Interacts with GRB7. Interacts with PDPK1. Interacts with GRB14 (via BPS domain). Interacts (via subunit alpha) with ENPP1 (via 485-599 AA); this interaction blocks autophosphorylation. Interacts with PTPRE. Interacts with STAT5B (via SH2 domain). Interacts with PTPRF. Interacts with ATIC; ATIC together with PRKAA2/AMPK2 and HACD3/PTPLAD1 is proposed to be part of a signaling netwok regulating INSR autophosphorylation and endocytosis. Interacts with the insulin receptor SORL1; this interaction strongly increases its surface exposure, hence strengthens insulin signal reception. Interacts (tyrosine phosphorylated) with CCDC88A/GIV (via SH2-like region); binding requires autophosphorylation of the INSR C-terminal region. Interacts with GNAI3; the interaction is probably mediated by CCDC88A/GIV. Interacts with LMBRD1. Interacts (in response to insulin stimulation) with NCK1; this interaction may recruit PTPN1 to mediate INSR dephosphorylation. In terms of processing, after being transported from the endoplasmic reticulum to the Golgi apparatus, the single glycosylated precursor is further glycosylated and then cleaved, followed by its transport to the plasma membrane. Post-translationally, autophosphorylated on tyrosine residues in response to insulin. Dephosphorylated by PTPN1, PTPRE and PTPRF. Dephosphorylated by PTPN2; down-regulates insulin-induced signaling. S-nitrosylation by BLVRB inhibits the receptor tyrosine kinase, thereby inhibiting insulin signaling.

The protein resides in the cell membrane. Its subcellular location is the late endosome. It is found in the lysosome. It catalyses the reaction L-tyrosyl-[protein] + ATP = O-phospho-L-tyrosyl-[protein] + ADP + H(+). Activated in response to insulin. Autophosphorylation activates the kinase activity. PTPN1, PTPRE and PTPRF dephosphorylate important tyrosine residues, thereby reducing INSR activity. Inhibited by ENPP1. GRB10 and GRB14 inhibit the catalytic activity of the INSR, they block access of substrates to the activated receptor. SOCS1 and SOCS3 act as negative regulators of INSR activity, they bind to the activated INRS and interfere with the phosphorylation of INSR substrates. In terms of biological role, receptor tyrosine kinase which mediates the pleiotropic actions of insulin. Binding of insulin leads to phosphorylation of several intracellular substrates, including, insulin receptor substrates (IRS1, 2, 3, 4), SHC, GAB1, CBL and other signaling intermediates. Each of these phosphorylated proteins serve as docking proteins for other signaling proteins that contain Src-homology-2 domains (SH2 domain) that specifically recognize different phosphotyrosine residues, including the p85 regulatory subunit of PI3K and SHP2. Phosphorylation of IRSs proteins lead to the activation of two main signaling pathways: the PI3K-AKT/PKB pathway, which is responsible for most of the metabolic actions of insulin, and the Ras-MAPK pathway, which regulates expression of some genes and cooperates with the PI3K pathway to control cell growth and differentiation. Binding of the SH2 domains of PI3K to phosphotyrosines on IRS1 leads to the activation of PI3K and the generation of phosphatidylinositol-(3, 4, 5)-triphosphate (PIP3), a lipid second messenger, which activates several PIP3-dependent serine/threonine kinases, such as PDPK1 and subsequently AKT/PKB. The net effect of this pathway is to produce a translocation of the glucose transporter SLC2A4/GLUT4 from cytoplasmic vesicles to the cell membrane to facilitate glucose transport. Moreover, upon insulin stimulation, activated AKT/PKB is responsible for: anti-apoptotic effect of insulin by inducing phosphorylation of BAD; regulates the expression of gluconeogenic and lipogenic enzymes by controlling the activity of the winged helix or forkhead (FOX) class of transcription factors. Another pathway regulated by PI3K-AKT/PKB activation is mTORC1 signaling pathway which regulates cell growth and metabolism and integrates signals from insulin. AKT mediates insulin-stimulated protein synthesis by phosphorylating TSC2 thereby activating mTORC1 pathway. The Ras/RAF/MAP2K/MAPK pathway is mainly involved in mediating cell growth, survival and cellular differentiation of insulin. Phosphorylated IRS1 recruits GRB2/SOS complex, which triggers the activation of the Ras/RAF/MAP2K/MAPK pathway. In addition to binding insulin, the insulin receptor can bind insulin-like growth factors (IGFI and IGFII). When present in a hybrid receptor with IGF1R, binds IGF1. In adipocytes, inhibits lipolysis. The chain is Insulin receptor (INSR) from Macaca mulatta (Rhesus macaque).